Here is a 486-residue protein sequence, read N- to C-terminus: Cardiolipin synthase A (486 aa).

2 helical membrane passes run 3-23 (TFYT…IAGV) and 38-58 (MAWL…YLSF). PLD phosphodiesterase domains are found at residues 219–246 (MDLR…VDPR) and 399–426 (EGGL…DMRS). Residues His224, Lys226, Asp231, His404, Lys406, and Asp411 contribute to the active site.

The protein belongs to the phospholipase D family. Cardiolipin synthase subfamily. ClsA sub-subfamily.

Its subcellular location is the cell inner membrane. The catalysed reaction is 2 a 1,2-diacyl-sn-glycero-3-phospho-(1'-sn-glycerol) = a cardiolipin + glycerol. Functionally, catalyzes the reversible phosphatidyl group transfer from one phosphatidylglycerol molecule to another to form cardiolipin (CL) (diphosphatidylglycerol) and glycerol. In Yersinia pseudotuberculosis serotype O:1b (strain IP 31758), this protein is Cardiolipin synthase A.